Reading from the N-terminus, the 150-residue chain is 3-dehydroquinate dehydratase (150 aa).

The active-site Proton acceptor is the Tyr26. Residues Asn77, His83, and Asp90 each contribute to the substrate site. Catalysis depends on His103, which acts as the Proton donor. Residues 104-105 (LS) and Arg114 each bind substrate.

The protein belongs to the type-II 3-dehydroquinase family. Homododecamer.

It carries out the reaction 3-dehydroquinate = 3-dehydroshikimate + H2O. Its pathway is metabolic intermediate biosynthesis; chorismate biosynthesis; chorismate from D-erythrose 4-phosphate and phosphoenolpyruvate: step 3/7. In terms of biological role, catalyzes a trans-dehydration via an enolate intermediate. This is 3-dehydroquinate dehydratase from Photorhabdus laumondii subsp. laumondii (strain DSM 15139 / CIP 105565 / TT01) (Photorhabdus luminescens subsp. laumondii).